The following is a 188-amino-acid chain: ATP synthase subunit delta (188 aa).

This sequence belongs to the ATPase delta chain family. In terms of assembly, F-type ATPases have 2 components, F(1) - the catalytic core - and F(0) - the membrane proton channel. F(1) has five subunits: alpha(3), beta(3), gamma(1), delta(1), epsilon(1). F(0) has three main subunits: a(1), b(2) and c(10-14). The alpha and beta chains form an alternating ring which encloses part of the gamma chain. F(1) is attached to F(0) by a central stalk formed by the gamma and epsilon chains, while a peripheral stalk is formed by the delta and b chains.

Its subcellular location is the cell inner membrane. F(1)F(0) ATP synthase produces ATP from ADP in the presence of a proton or sodium gradient. F-type ATPases consist of two structural domains, F(1) containing the extramembraneous catalytic core and F(0) containing the membrane proton channel, linked together by a central stalk and a peripheral stalk. During catalysis, ATP synthesis in the catalytic domain of F(1) is coupled via a rotary mechanism of the central stalk subunits to proton translocation. In terms of biological role, this protein is part of the stalk that links CF(0) to CF(1). It either transmits conformational changes from CF(0) to CF(1) or is implicated in proton conduction. This chain is ATP synthase subunit delta, found in Rhizobium johnstonii (strain DSM 114642 / LMG 32736 / 3841) (Rhizobium leguminosarum bv. viciae).